The chain runs to 336 residues: N-lysine methyltransferase KMT5A-B (336 aa).

2 disordered regions span residues 1-107 (MGRG…SSKQ) and 141-165 (QSQK…NRKL). The segment covering 67 to 93 (SVAHHESKNLGKPTTETRKKAEVEKKR) has biased composition (basic and acidic residues). Residues 95–104 (SSATELSVKS) are compositionally biased toward polar residues. The segment covering 146-162 (VKNKSQRRKAQRKKSPN) has biased composition (basic residues). The region spanning 200–321 (DGMKMDMIIG…VGEELLYDYG (122 aa)) is the SET domain. Residues 210 to 212 (KGR), tyrosine 255, and 282 to 283 (NH) contribute to the S-adenosyl-L-methionine site.

It belongs to the class V-like SAM-binding methyltransferase superfamily. Histone-lysine methyltransferase family. PR/SET subfamily. In terms of processing, phosphorylated during mitosis.

It localises to the nucleus. The protein localises to the chromosome. The enzyme catalyses L-lysyl(20)-[histone H4] + S-adenosyl-L-methionine = N(6)-methyl-L-lysyl(20)-[histone H4] + S-adenosyl-L-homocysteine + H(+). It catalyses the reaction L-lysyl-[protein] + S-adenosyl-L-methionine = N(6)-methyl-L-lysyl-[protein] + S-adenosyl-L-homocysteine + H(+). In terms of biological role, protein-lysine N-methyltransferase that monomethylates both histones and non-histone proteins. Specifically monomethylates 'Lys-20' of histone H4 (H4K20me1). H4K20me1 is enriched during mitosis and represents a specific tag for epigenetic transcriptional repression. Mainly functions in euchromatin regions, thereby playing a central role in the silencing of euchromatic genes. Required for cell proliferation, probably by contributing to the maintenance of proper higher-order structure of DNA during mitosis. Involved in chromosome condensation and proper cytokinesis. In Xenopus laevis (African clawed frog), this protein is N-lysine methyltransferase KMT5A-B.